A 478-amino-acid chain; its full sequence is Kynureninase (478 aa).

Pyridoxal 5'-phosphate-binding positions include Leu138, Thr139, 166-169, Asp252, His255, and Tyr277; that span reads FPSD. Position 278 is an N6-(pyridoxal phosphate)lysine (Lys278). Positions 315 and 343 each coordinate pyridoxal 5'-phosphate.

This sequence belongs to the kynureninase family. Homodimer. It depends on pyridoxal 5'-phosphate as a cofactor.

The protein resides in the cytoplasm. The catalysed reaction is L-kynurenine + H2O = anthranilate + L-alanine + H(+). The enzyme catalyses 3-hydroxy-L-kynurenine + H2O = 3-hydroxyanthranilate + L-alanine + H(+). It functions in the pathway amino-acid degradation; L-kynurenine degradation; L-alanine and anthranilate from L-kynurenine: step 1/1. It participates in cofactor biosynthesis; NAD(+) biosynthesis; quinolinate from L-kynurenine: step 2/3. In terms of biological role, catalyzes the cleavage of L-kynurenine (L-Kyn) and L-3-hydroxykynurenine (L-3OHKyn) into anthranilic acid (AA) and 3-hydroxyanthranilic acid (3-OHAA), respectively. The protein is Kynureninase of Coccidioides immitis (strain RS) (Valley fever fungus).